Reading from the N-terminus, the 357-residue chain is Chorismate synthase (357 aa).

Residue R46 coordinates NADP(+). Residues R123–S125, N235–A236, G275, K290–S294, and R316 each bind FMN.

The protein belongs to the chorismate synthase family. In terms of assembly, homotetramer. The cofactor is FMNH2.

The catalysed reaction is 5-O-(1-carboxyvinyl)-3-phosphoshikimate = chorismate + phosphate. It functions in the pathway metabolic intermediate biosynthesis; chorismate biosynthesis; chorismate from D-erythrose 4-phosphate and phosphoenolpyruvate: step 7/7. In terms of biological role, catalyzes the anti-1,4-elimination of the C-3 phosphate and the C-6 proR hydrogen from 5-enolpyruvylshikimate-3-phosphate (EPSP) to yield chorismate, which is the branch point compound that serves as the starting substrate for the three terminal pathways of aromatic amino acid biosynthesis. This reaction introduces a second double bond into the aromatic ring system. The polypeptide is Chorismate synthase (Nitratiruptor sp. (strain SB155-2)).